The chain runs to 439 residues: Glutamine synthetase (439 aa).

One can recognise a GS beta-grasp domain in the interval 12–93 (RSPKFVQLIF…VYGYIYKDGK (82 aa)). The 341-residue stretch at 99–439 (PRGVLKRVIE…EWELERYFFI (341 aa)) folds into the GS catalytic domain. The Mg(2+) site is built by glutamate 122 and glutamate 124. Glutamate 172 contributes to the ATP binding site. Mg(2+) contacts are provided by glutamate 177 and glutamate 184. L-glutamate is bound at residue glycine 229. Histidine 233 provides a ligand contact to Mg(2+). Residues 235–237 (HIS) and serine 237 contribute to the ATP site. Residues arginine 283, glutamate 289, and arginine 301 each coordinate L-glutamate. Residues arginine 301 and arginine 306 each contribute to the ATP site. Residue glutamate 318 coordinates Mg(2+). Arginine 320 provides a ligand contact to L-glutamate.

This sequence belongs to the glutamine synthetase family. Oligomer of 12 subunits arranged in the form of two hexagons. Mg(2+) is required as a cofactor.

The protein resides in the cytoplasm. The enzyme catalyses L-glutamate + NH4(+) + ATP = L-glutamine + ADP + phosphate + H(+). Its function is as follows. Probably involved in nitrogen metabolism via ammonium assimilation. Catalyzes the ATP-dependent biosynthesis of glutamine from glutamate and ammonia. The chain is Glutamine synthetase from Pyrococcus abyssi (strain GE5 / Orsay).